The chain runs to 472 residues: F-box protein At3g03040 (472 aa).

The region spanning 1–49 (MDLLSSLPDEVRCLILSFLTTKESASTSVLSKKWRNLFALVPNLDFDDS) is the F-box domain.

This Arabidopsis thaliana (Mouse-ear cress) protein is F-box protein At3g03040.